The following is a 126-amino-acid chain: Holo-[acyl-carrier-protein] synthase (126 aa).

D8 and E57 together coordinate Mg(2+).

The protein belongs to the P-Pant transferase superfamily. AcpS family. Mg(2+) is required as a cofactor.

The protein resides in the cytoplasm. It catalyses the reaction apo-[ACP] + CoA = holo-[ACP] + adenosine 3',5'-bisphosphate + H(+). Transfers the 4'-phosphopantetheine moiety from coenzyme A to a Ser of acyl-carrier-protein. This chain is Holo-[acyl-carrier-protein] synthase, found in Vibrio cholerae serotype O1 (strain ATCC 39541 / Classical Ogawa 395 / O395).